The primary structure comprises 226 residues: Thioredoxin domain-containing protein 9 (226 aa).

Residues 74-180 (REIPSERDFF…TTETLEWRLG (107 aa)) enclose the Thioredoxin domain. Phosphoserine occurs at positions 188, 221, and 223.

In terms of assembly, forms ternary complexes with the chaperonin TCP1 complex, spanning the cylindrical chaperonin cavity and contacting at least 2 subunits.

The protein resides in the cytoplasm. Its subcellular location is the nucleus. It localises to the cytoskeleton. The protein localises to the microtubule organizing center. It is found in the centrosome. The protein resides in the midbody. In terms of biological role, significantly diminishes the chaperonin TCP1 complex ATPase activity, thus negatively impacts protein folding, including that of actin or tubulin. The protein is Thioredoxin domain-containing protein 9 (TXNDC9) of Homo sapiens (Human).